The primary structure comprises 159 residues: Large ribosomal subunit protein eL29 (159 aa).

Residues 1–26 (MAKSKNHTTHNQSRKWHRNGIKKPRS) show a composition bias toward basic residues. The disordered stretch occupies residues 1 to 32 (MAKSKNHTTHNQSRKWHRNGIKKPRSQRYESL). Lys-5 is subject to N6-methyllysine. At Ser-31 the chain carries Phosphoserine. Lys-33 is subject to N6-acetyllysine. Basic residues predominate over residues 117 to 127 (RLCRPKAKAKA). The disordered stretch occupies residues 117 to 159 (RLCRPKAKAKAKAKDQTKAQAAAPASVPAQAPKRTQAPTKASE). The span at 134-149 (KAQAAAPASVPAQAPK) shows a compositional bias: low complexity. Position 142 is a phosphoserine (Ser-142).

The protein belongs to the eukaryotic ribosomal protein eL29 family. In terms of assembly, component of the large ribosomal subunit.

The protein localises to the cytoplasm. In terms of biological role, component of the large ribosomal subunit. The ribosome is a large ribonucleoprotein complex responsible for the synthesis of proteins in the cell. This is Large ribosomal subunit protein eL29 (RPL29) from Homo sapiens (Human).